Consider the following 356-residue polypeptide: GDP-mannose:di-myo-inositol-1,3'-phosphate beta-1,2-mannosyltransferase (356 aa).

Belongs to the MDIP synthase family. Mg(2+) serves as cofactor.

The catalysed reaction is bis(myo-inositol) 1,3'-phosphate + GDP-alpha-D-mannose = 2-O-(beta-D-mannosyl)-bis(myo-inositol) 1,3'-phosphate + GDP + H(+). It catalyses the reaction 2-O-(beta-D-mannosyl)-bis(myo-inositol) 1,3'-phosphate + GDP-alpha-D-mannose = 2-O-(beta-D-mannosyl-(1-&gt;2)-beta-D-mannosyl)-bis(myo-inositol) 1,3'-phosphate + GDP + H(+). It carries out the reaction bis(myo-inositol) 1,3'-phosphate + 2 GDP-alpha-D-mannose = 2-O-(beta-D-mannosyl-(1-&gt;2)-beta-D-mannosyl)-bis(myo-inositol) 1,3'-phosphate + 2 GDP + 2 H(+). Its function is as follows. Catalyzes the transfer of the mannosyl group from GDP-mannose to di-myo-inositol-1,3'-phosphate (DIP), producing mannosyl-di-myo-inositol phosphate (MDIP). Can also use MDIP as an acceptor of a second mannose residue, yielding di-mannosyl-di-myo-inositol phosphate (MMDIP). Minor amounts of the tri-mannosylated form are also formed. This Thermotoga maritima (strain ATCC 43589 / DSM 3109 / JCM 10099 / NBRC 100826 / MSB8) protein is GDP-mannose:di-myo-inositol-1,3'-phosphate beta-1,2-mannosyltransferase.